The sequence spans 473 residues: Proton-coupled folate transporter (473 aa).

A compositionally biased stretch (pro residues) spans 1–20 (MAAPSDPPTAATPPAPPPPA). Positions 1–21 (MAAPSDPPTAATPPAPPPPAR) are disordered. Topologically, residues 1–29 (MAAPSDPPTAATPPAPPPPARRCLLAPSV) are cytoplasmic. The helical transmembrane segment at 30-48 (EPLLFLATLALGLQVPLAT) threads the bilayer. The Extracellular segment spans residues 49-90 (QYLWDRLGAERGYVGPNASSPHGCGNGSGAVDPLREEVEALV). 2 N-linked (GlcNAc...) asparagine glycosylation sites follow: Asn65 and Asn74. Cys72 and Cys306 form a disulfide bridge. Residues 91–116 (AHWNLCINLGGFFVGLFSVTLFGPWS) form a helical membrane-spanning segment. Residue Asn98 participates in pemetrexed binding. At 117-120 (DSVG) the chain is on the cytoplasmic side. A helical transmembrane segment spans residues 121-143 (RRPVLVLPAVGMAVQAAVYLLVM). At 144 to 148 (YLRLH) the chain is on the extracellular side. A helical transmembrane segment spans residues 149–162 (VAYLLLGRIISGLL). At 163-185 (GDYNLILAGCFASVADSSNQRTR) the chain is on the cytoplasmic side. H(+)-binding residues include Asp164 and Glu193. A helical transmembrane segment spans residues 186–211 (TFRVAILEACLGVAGMVASVGGGQWR). Pemetrexed is bound at residue Glu193. Residues 212-216 (KAEGY) are Extracellular-facing. Residues 217–235 (INPFWLVLAASLAAALYAA) traverse the membrane as a helical segment. The Cytoplasmic segment spans residues 236 to 274 (LCLQETVKQRRAAKLLTLQHYKAVYKLYTAPEDLSSRRK). Residues 275–297 (LALYSLAFFLLVTVHFGTKDLYV) form a helical membrane-spanning segment. H(+) is bound at residue His289. The Extracellular segment spans residues 298–310 (LYELGSPLCWASD). The helical transmembrane segment at 311–333 (LIGYGSAASYLAYLSSLGGLRLL) threads the bilayer. Tyr323 contributes to the pemetrexed binding site. The Cytoplasmic segment spans residues 334-339 (QLCLED). Residues 340–359 (TWVAEIGLISNIAGLVVISL) traverse the membrane as a helical segment. Over 360–363 (ATTT) the chain is Extracellular. Residues 364-384 (PLMFTGYGIMFLSMAATPVIR) traverse the membrane as a helical segment. At 385-396 (AKLSKLVGETEQ) the chain is on the cytoplasmic side. The helical transmembrane segment at 397 to 422 (GALFASVACVEGLCSLVATGVFNSLY) threads the bilayer. Residues Glu407 and Ser411 each coordinate pemetrexed. The Extracellular portion of the chain corresponds to 423–430 (PSTLHFMR). The helical transmembrane segment at 431–449 (GFPFLFGAILLLIPAAIMG) threads the bilayer. Residues 450–473 (WIEIQDSNLQYSHFSDASSSPADG) lie on the Cytoplasmic side of the membrane.

The protein belongs to the major facilitator superfamily. SLC46A family. As to quaternary structure, monomer. In terms of tissue distribution, widely expressed, including brain, aorta, liver, kidney, spleen, small intestine, pancreas, ovary and testis.

The protein resides in the cell membrane. The protein localises to the apical cell membrane. It is found in the basolateral cell membrane. It localises to the endosome membrane. Its subcellular location is the cytoplasm. The enzyme catalyses folate(in) + H(+)(in) = folate(out) + H(+)(out). It catalyses the reaction (6S)-5-methyl-5,6,7,8-tetrahydrofolate(in) + H(+)(in) = (6S)-5-methyl-5,6,7,8-tetrahydrofolate(out) + H(+)(out). The catalysed reaction is methotrexate(in) + H(+)(in) = methotrexate(out) + H(+)(out). It carries out the reaction pemetrexed(in) + H(+)(in) = pemetrexed(out) + H(+)(out). Its function is as follows. Proton-coupled folate symporter that mediates folate absorption using an H(+) gradient as a driving force. Involved in the intestinal absorption of folates at the brush-border membrane of the proximal jejunum, and the transport from blood to cerebrospinal fluid across the choroid plexus. Functions at acidic pH via alternate outward- and inward-open conformation states. Protonation of residues in the outward open state primes the protein for transport. Binding of folate promotes breaking of salt bridge network and subsequent closure of the extracellular gate, leading to the inward-open state and release of protons and folate. Also able to transport antifolate drugs, such as methotrexate and pemetrexed. Also acts as a lower-affinity, pH-independent heme carrier protein and constitutes the main importer of heme in the intestine. Imports heme in the retina and retinal pigment epithelium, in neurons of the hippocampus, in hepatocytes and in the renal epithelial cells. The chain is Proton-coupled folate transporter from Gallus gallus (Chicken).